The following is a 669-amino-acid chain: Cysteine-rich receptor-like protein kinase 34 (669 aa).

Residues 1 to 23 (MKLKISFLPTFLIFLISLDSVTA) form the signal peptide. 2 Gnk2-homologous domains span residues 24 to 123 (QEIC…NVSF) and 133 to 246 (ETLY…LYPY). The Extracellular portion of the chain corresponds to 24–285 (QEICFSGFFK…SDRANTTIKG (262 aa)). N-linked (GlcNAc...) asparagine glycosylation is found at asparagine 35, asparagine 52, asparagine 103, asparagine 120, asparagine 147, asparagine 172, asparagine 252, and asparagine 280. The helical transmembrane segment at 286–306 (IIVAIVVPIIVILVSLVVLLV) threads the bilayer. Residues 307–669 (VCRRKKSYKT…DASITEFYPR (363 aa)) are Cytoplasmic-facing. Residues 345–624 (FSDSNMIGRG…MMLTSSTTTL (280 aa)) enclose the Protein kinase domain. ATP-binding positions include 351 to 359 (IGRGGFGEV) and lysine 373. A Phosphotyrosine modification is found at tyrosine 418. Aspartate 470 acts as the Proton acceptor in catalysis. Phosphoserine is present on serine 474. Threonine 510 is subject to Phosphothreonine. Position 518 is a phosphotyrosine (tyrosine 518).

The protein belongs to the protein kinase superfamily. Ser/Thr protein kinase family. CRK subfamily.

It localises to the membrane. It catalyses the reaction L-seryl-[protein] + ATP = O-phospho-L-seryl-[protein] + ADP + H(+). The catalysed reaction is L-threonyl-[protein] + ATP = O-phospho-L-threonyl-[protein] + ADP + H(+). This chain is Cysteine-rich receptor-like protein kinase 34, found in Arabidopsis thaliana (Mouse-ear cress).